Here is a 140-residue protein sequence, read N- to C-terminus: Pre-mRNA-splicing factor NTC20 (140 aa).

Ser139 is modified (phosphoserine).

As to quaternary structure, belongs to the NTC complex (or PRP19-associated complex), composed of at least CEF1, CLF1, ISY1, NTC20, SNT309, SYF1, SYF2, and PRP19. The NTC complex associates with the spliceosome after the release of the U1 and U4 snRNAs and forms the CWC spliceosome subcomplex (or CEF1-associated complex) reminiscent of a late-stage spliceosome composed also of the U2, U5 and U6 snRNAs and at least BUD13, BRR2, CDC40, CUS1, CWC2, CWC15, CWC21, CWC22, CWC23, CWC24, CWC25, CWC27, ECM2, HSH155, IST3, LEA1, MSL1, PRP8, PRP9, PRP11, PRP21, PRP22, PRP45, PRP46, SLU7, SMB1, SMD1, SMD2, SMD3, SMX2, SMX3, SNU114, SPP2, RSE1 and YJU2. Interacts with CEF1, CLF1, ISY1, PRP46, and SYF1.

The protein localises to the nucleus. Functionally, involved in pre-mRNA splicing. As a component of the NTC complex, associates to the spliceosome to mediate conformational rearrangement or to stabilize the structure of the spliceosome after U4 snRNA dissociation, which leads to spliceosome maturation. The chain is Pre-mRNA-splicing factor NTC20 (NTC20) from Saccharomyces cerevisiae (strain ATCC 204508 / S288c) (Baker's yeast).